The chain runs to 563 residues: Beta-catenin-like protein 1 (563 aa).

At Met-1 the chain carries N-acetylmethionine. The segment at 1-81 (MDVGELLSYQ…EEEEPLDESS (81 aa)) is disordered. Positions 16–33 (KRPRDDEEEELKTRRKQT) match the Nuclear localization signal motif. A compositionally biased stretch (basic and acidic residues) spans 34 to 45 (GPRERGRYREDE). Residues 66-78 (DGEEEEEEEEPLD) are compositionally biased toward acidic residues. HEAT repeat units follow at residues 79–129 (ESSV…VVAT) and 134–176 (YHLL…TLHE). An N6-acetyllysine modification is found at Lys-91. The Nuclear export signal (NES) signature appears at 130–140 (MPDLYHLLVEL). 5 ARM repeats span residues 178–228 (EEGA…MAEF), 229–273 (RPEM…LQDN), 274–323 (DENR…CLML), 325–363 (SNRE…AMIG), and 364–417 (PEGA…LLRN). Ser-389 carries the phosphoserine modification. The stretch at 476-540 (DMEDEFYLRR…HIIKEYAENI (65 aa)) forms a coiled coil. Ser-545 is subject to Phosphoserine.

In terms of assembly, component of the PRP19-CDC5L splicing complex composed of a core complex comprising a homotetramer of PRPF19, CDC5L, PLRG1 and BCAS2, and at least three less stably associated proteins CTNNBL1, CWC15 and HSPA8. Interacts directly with CWC15 and CDC5L in the complex. Interacts with AICDA; the interaction is important for the antibody diversification activity of AICDA. Interacts with PRPF31 (via its NLS). Interacts (via its N-terminal NLS) with KPNA1 and KPNA2.

It localises to the nucleus. Its function is as follows. Component of the PRP19-CDC5L complex that forms an integral part of the spliceosome and is required for activating pre-mRNA splicing. Participates in AID/AICDA-mediated somatic hypermutation (SHM) and class-switch recombination (CSR), 2 processes resulting in the production of high-affinity, mutated isotype-switched antibodies. In Rattus norvegicus (Rat), this protein is Beta-catenin-like protein 1 (Ctnnbl1).